The chain runs to 211 residues: Small ribosomal subunit protein uS5 (211 aa).

The region spanning 51–114 (LKHEVLDVSL…ANAKLNITPV (64 aa)) is the S5 DRBM domain.

It belongs to the universal ribosomal protein uS5 family. In terms of assembly, part of the 30S ribosomal subunit. Contacts protein S4.

Its function is as follows. With S4 and S12 plays an important role in translational accuracy. The chain is Small ribosomal subunit protein uS5 from Ignicoccus hospitalis (strain KIN4/I / DSM 18386 / JCM 14125).